We begin with the raw amino-acid sequence, 223 residues long: Serine/threonine/tyrosine-interacting protein (223 aa).

The 149-residue stretch at glutamate 28–alanine 176 folds into the Tyrosine-protein phosphatase domain. The short motif at phenylalanine 76–glutamine 78 is the Interaction with FBXW7 element. A phosphoserine mark is found at serine 184, serine 193, and serine 201. The segment at glycine 197 to glycine 223 is disordered.

The protein belongs to the protein-tyrosine phosphatase family. Non-receptor class subfamily. As to quaternary structure, interacts with MAPK1; independently of MAPK1 phosphorylation status. Interacts with CARHSP1/Crhsp-24. Interacts (via FQQ motif) with FBXW7 (via F-box domain); the interaction is direct and prevents FBXW7 interaction with SKP1, a component of the SCF(FBXW7) complex.

The protein localises to the nucleus. The protein resides in the cytoplasm. Its subcellular location is the cytosol. Functionally, catalytically inactive phosphatase. Acts as a nuclear anchor for MAPK1/MAPK3 (ERK1/ERK2). Modulates cell-fate decisions and cell migration by spatiotemporal regulation of MAPK1/MAPK3 (ERK1/ERK2). By binding to the F-box of FBXW7, prevents the assembly of FBXW7 into the SCF E3 ubiquitin-protein ligase complex, and thereby inhibits degradation of its substrates. Plays a role in spermatogenesis. The polypeptide is Serine/threonine/tyrosine-interacting protein (STYX) (Pongo abelii (Sumatran orangutan)).